The sequence spans 269 residues: Eukaryotic translation initiation factor 3 subunit G-1 (269 aa).

An RRM domain is found at 188–266 (AAIRISNLSE…LILSVEWSKP (79 aa)).

Belongs to the eIF-3 subunit G family. As to quaternary structure, component of the eukaryotic translation initiation factor 3 (eIF-3) complex. The eIF-3 complex interacts with pix.

It localises to the cytoplasm. Its function is as follows. RNA-binding component of the eukaryotic translation initiation factor 3 (eIF-3) complex, which is involved in protein synthesis of a specialized repertoire of mRNAs and, together with other initiation factors, stimulates binding of mRNA and methionyl-tRNAi to the 40S ribosome. The eIF-3 complex specifically targets and initiates translation of a subset of mRNAs involved in cell proliferation. This subunit can bind 18S rRNA. In Drosophila erecta (Fruit fly), this protein is Eukaryotic translation initiation factor 3 subunit G-1.